A 917-amino-acid polypeptide reads, in one-letter code: Translation initiation factor IF-2 (917 aa).

Basic and acidic residues predominate over residues 102-249; it reads EKSQAEEQAL…KWTAEPKAPE (148 aa). Positions 102–326 are disordered; it reads EKSQAEEQAL…KSSTLQQGFH (225 aa). The segment covering 279–293 has biased composition (basic residues); sequence RRGRTAKAPRAKKNN. Residues 294–306 show a composition bias toward basic and acidic residues; sequence RHSEKADREEARA. The 170-residue stretch at 416–585 folds into the tr-type G domain; sequence SRAPVVTIMG…LLQAEVLELK (170 aa). Residues 425–432 are G1; that stretch reads GHVDHGKT. Position 425 to 432 (425 to 432) interacts with GTP; it reads GHVDHGKT. A G2 region spans residues 450–454; the sequence is GITQH. The tract at residues 471 to 474 is G3; that stretch reads DTPG. Residues 471–475 and 525–528 contribute to the GTP site; these read DTPGH and NKID. Residues 525-528 are G4; sequence NKID. Residues 561-563 form a G5 region; the sequence is SAK.

Belongs to the TRAFAC class translation factor GTPase superfamily. Classic translation factor GTPase family. IF-2 subfamily.

The protein localises to the cytoplasm. In terms of biological role, one of the essential components for the initiation of protein synthesis. Protects formylmethionyl-tRNA from spontaneous hydrolysis and promotes its binding to the 30S ribosomal subunits. Also involved in the hydrolysis of GTP during the formation of the 70S ribosomal complex. The chain is Translation initiation factor IF-2 (infB) from Proteus vulgaris.